Here is a 238-residue protein sequence, read N- to C-terminus: MRPSGRAADALRPITLTRQYTRHAEGSVLSAFGDTKVLCTASVLAKVPPHKKGSGEGWVTAEYGMLPRATHTRSDREAARGKQTGRTQEIQRLIGRAMRSVFDLAALGEYTIHLDCDVLQADGGTRTAAITGAFVAAHDAVSAMLRDGQIKASPIRDFVAAVSVGMVNGVPVLDLDYAEDSNCDTDMNVVMTGSGGFVEVQGTAEGTPFSRADLDAMTRLAEAGIAELVRHQKQALGL.

Residues Arg86 and 124–126 contribute to the phosphate site; that span reads GTR.

This sequence belongs to the RNase PH family. As to quaternary structure, homohexameric ring arranged as a trimer of dimers.

It carries out the reaction tRNA(n+1) + phosphate = tRNA(n) + a ribonucleoside 5'-diphosphate. In terms of biological role, phosphorolytic 3'-5' exoribonuclease that plays an important role in tRNA 3'-end maturation. Removes nucleotide residues following the 3'-CCA terminus of tRNAs; can also add nucleotides to the ends of RNA molecules by using nucleoside diphosphates as substrates, but this may not be physiologically important. Probably plays a role in initiation of 16S rRNA degradation (leading to ribosome degradation) during starvation. The sequence is that of Ribonuclease PH from Cupriavidus metallidurans (strain ATCC 43123 / DSM 2839 / NBRC 102507 / CH34) (Ralstonia metallidurans).